The primary structure comprises 298 residues: Protein OS-9 homolog (298 aa).

The first 25 residues, 1–25 (MGLAGGARVVLFVVAAAAAAALTAA), serve as a signal peptide directing secretion. A glycan (N-linked (GlcNAc...) asparagine) is linked at Asn-95. The 126-residue stretch at 121-246 (DQCFYRHEGW…TVQSPMLCKN (126 aa)) folds into the MRH domain. Cysteines 123 and 136 form a disulfide. A mannooligosaccharide derivative contacts are provided by Trp-130, Trp-131, and Gln-143. N-linked (GlcNAc...) asparagine glycosylation is found at Asn-171 and Asn-197. 2 disulfide bridges follow: Cys-201–Cys-232 and Cys-216–Cys-244. Residues Asp-202, Arg-208, Glu-228, and Tyr-234 each contribute to the a mannooligosaccharide derivative site.

Belongs to the OS-9 family. As to quaternary structure, interacts with HRD3.

It is found in the endoplasmic reticulum. Its function is as follows. Lectin which functions in endoplasmic reticulum (ER) quality control and ER-associated degradation (ERAD). May bind terminally misfolded non-glycosylated proteins as well as improperly folded glycoproteins, retain them in the ER, and possibly transfer them to the ubiquitination machinery and promote their degradation. The protein is Protein OS-9 homolog of Oryza sativa subsp. japonica (Rice).